We begin with the raw amino-acid sequence, 417 residues long: Serine hydroxymethyltransferase (417 aa).

Residues leucine 121 and 125–127 (GHL) contribute to the (6S)-5,6,7,8-tetrahydrofolate site. Lysine 229 carries the post-translational modification N6-(pyridoxal phosphate)lysine. 355–357 (SPF) provides a ligand contact to (6S)-5,6,7,8-tetrahydrofolate.

It belongs to the SHMT family. Homodimer. Pyridoxal 5'-phosphate is required as a cofactor.

The protein localises to the cytoplasm. The catalysed reaction is (6R)-5,10-methylene-5,6,7,8-tetrahydrofolate + glycine + H2O = (6S)-5,6,7,8-tetrahydrofolate + L-serine. It functions in the pathway one-carbon metabolism; tetrahydrofolate interconversion. It participates in amino-acid biosynthesis; glycine biosynthesis; glycine from L-serine: step 1/1. Catalyzes the reversible interconversion of serine and glycine with tetrahydrofolate (THF) serving as the one-carbon carrier. This reaction serves as the major source of one-carbon groups required for the biosynthesis of purines, thymidylate, methionine, and other important biomolecules. Also exhibits THF-independent aldolase activity toward beta-hydroxyamino acids, producing glycine and aldehydes, via a retro-aldol mechanism. In Buchnera aphidicola subsp. Acyrthosiphon pisum (strain 5A), this protein is Serine hydroxymethyltransferase.